Consider the following 220-residue polypeptide: MHLSSPALPIGGFSYSQGLEAAIELGLVHDEASTLAWIESQLVTVMARAEAPLWCLLFEAWRAGDDAAAHGWNQWFHASRETRELRQETEQMGRSLARLAQELGWGTAATRAAVAALRPATLPAVHACACAMWALPREAGLGAYVFSWLENQVAAAIKGVPLGQMAGQRMLERLRAGLPAVLADARARAGATPPRLDTFAPQYALVSARHETQFSRLFRS.

Belongs to the UreF family. UreD, UreF and UreG form a complex that acts as a GTP-hydrolysis-dependent molecular chaperone, activating the urease apoprotein by helping to assemble the nickel containing metallocenter of UreC. The UreE protein probably delivers the nickel.

Its subcellular location is the cytoplasm. Required for maturation of urease via the functional incorporation of the urease nickel metallocenter. This chain is Urease accessory protein UreF, found in Bordetella parapertussis (strain 12822 / ATCC BAA-587 / NCTC 13253).